The chain runs to 183 residues: Thymidine kinase (183 aa).

11–18 contributes to the ATP binding site; sequence GPMFSGKT. Residue Glu89 is the Proton acceptor of the active site. Phe119 contributes to the substrate binding site. Zn(2+) contacts are provided by Cys144 and Cys147. 163–167 contributes to the substrate binding site; that stretch reads VMDIG. 2 residues coordinate Zn(2+): Cys176 and Cys179.

It belongs to the thymidine kinase family.

It carries out the reaction thymidine + ATP = dTMP + ADP + H(+). In Vertebrata (FPV), this protein is Thymidine kinase (TK).